The sequence spans 300 residues: UDP-3-O-acyl-N-acetylglucosamine deacetylase (300 aa).

His78, His237, and Asp241 together coordinate Zn(2+). Catalysis depends on His264, which acts as the Proton donor.

It belongs to the LpxC family. Requires Zn(2+) as cofactor.

The catalysed reaction is a UDP-3-O-[(3R)-3-hydroxyacyl]-N-acetyl-alpha-D-glucosamine + H2O = a UDP-3-O-[(3R)-3-hydroxyacyl]-alpha-D-glucosamine + acetate. The protein operates within glycolipid biosynthesis; lipid IV(A) biosynthesis; lipid IV(A) from (3R)-3-hydroxytetradecanoyl-[acyl-carrier-protein] and UDP-N-acetyl-alpha-D-glucosamine: step 2/6. Functionally, catalyzes the hydrolysis of UDP-3-O-myristoyl-N-acetylglucosamine to form UDP-3-O-myristoylglucosamine and acetate, the committed step in lipid A biosynthesis. This Acinetobacter baumannii (strain ATCC 17978 / DSM 105126 / CIP 53.77 / LMG 1025 / NCDC KC755 / 5377) protein is UDP-3-O-acyl-N-acetylglucosamine deacetylase.